Here is a 159-residue protein sequence, read N- to C-terminus: Large ribosomal subunit protein bL17 (159 aa).

The segment covering 119–138 (PVTPKAKPAKSTAKAAPKSK) has biased composition (low complexity). Positions 119-159 (PVTPKAKPAKSTAKAAPKSKAPVEETPDEPASEETAEAEAD) are disordered. A compositionally biased stretch (acidic residues) spans 143–159 (ETPDEPASEETAEAEAD).

This sequence belongs to the bacterial ribosomal protein bL17 family. In terms of assembly, part of the 50S ribosomal subunit. Contacts protein L32.

This chain is Large ribosomal subunit protein bL17, found in Leifsonia xyli subsp. xyli (strain CTCB07).